A 145-amino-acid polypeptide reads, in one-letter code: 3-hydroxyacyl-[acyl-carrier-protein] dehydratase FabZ (145 aa).

The active site involves histidine 49.

The protein belongs to the thioester dehydratase family. FabZ subfamily.

The protein resides in the cytoplasm. It carries out the reaction a (3R)-hydroxyacyl-[ACP] = a (2E)-enoyl-[ACP] + H2O. In terms of biological role, involved in unsaturated fatty acids biosynthesis. Catalyzes the dehydration of short chain beta-hydroxyacyl-ACPs and long chain saturated and unsaturated beta-hydroxyacyl-ACPs. The protein is 3-hydroxyacyl-[acyl-carrier-protein] dehydratase FabZ of Rickettsia felis (strain ATCC VR-1525 / URRWXCal2) (Rickettsia azadi).